Consider the following 81-residue polypeptide: Large ribosomal subunit protein bL27 (81 aa).

Residues 1 to 11 are compositionally biased toward polar residues; it reads MATSKSGGSSK. Positions 1–24 are disordered; sequence MATSKSGGSSKNGRDSISKRLGVK.

The protein belongs to the bacterial ribosomal protein bL27 family.

The polypeptide is Large ribosomal subunit protein bL27 (Borrelia duttonii (strain Ly)).